A 217-amino-acid polypeptide reads, in one-letter code: 3,4-dihydroxy-2-butanone 4-phosphate synthase (217 aa).

Residues 40–41 (RE), Asp45, 153–157 (RRGHT), and Glu177 contribute to the D-ribulose 5-phosphate site. Mg(2+) is bound at residue Glu41. His156 contacts Mg(2+).

Belongs to the DHBP synthase family. Homodimer. The cofactor is Mg(2+). Requires Mn(2+) as cofactor.

It carries out the reaction D-ribulose 5-phosphate = (2S)-2-hydroxy-3-oxobutyl phosphate + formate + H(+). The protein operates within cofactor biosynthesis; riboflavin biosynthesis; 2-hydroxy-3-oxobutyl phosphate from D-ribulose 5-phosphate: step 1/1. Catalyzes the conversion of D-ribulose 5-phosphate to formate and 3,4-dihydroxy-2-butanone 4-phosphate. The polypeptide is 3,4-dihydroxy-2-butanone 4-phosphate synthase (Aliivibrio fischeri (Vibrio fischeri)).